We begin with the raw amino-acid sequence, 340 residues long: Beta-1,3-N-acetylglucosaminyltransferase radical fringe (340 aa).

Topologically, residues 1-4 (MKIT) are cytoplasmic. A helical; Signal-anchor for type II membrane protein transmembrane segment spans residues 5 to 25 (YVGLIKVCFLVFLLLCATVLL). Residues 26–340 (NISWRQRDSS…AFSLAEDPTR (315 aa)) are Lumenal-facing. N-linked (GlcNAc...) asparagine glycosylation is present at Asn-42. Arg-110 lines the substrate pocket. Residue Asn-149 is glycosylated (N-linked (GlcNAc...) asparagine). 2 disulfides stabilise this stretch: Cys-150/Cys-161 and Cys-179/Cys-242. Asp-183 contacts substrate. Position 184 (Asp-184) interacts with Mn(2+). Asp-272 is an active-site residue. His-296 contacts Mn(2+).

It belongs to the glycosyltransferase 31 family. Mn(2+) serves as cofactor.

It localises to the golgi apparatus membrane. The catalysed reaction is 3-O-(alpha-L-fucosyl)-L-threonyl-[EGF-like domain protein] + UDP-N-acetyl-alpha-D-glucosamine = 3-O-(N-acetyl-beta-D-glucosaminyl-(1-&gt;3)-alpha-L-fucosyl)-L-threonyl-[EGF-like domain protein] + UDP + H(+). It catalyses the reaction 3-O-(alpha-L-fucosyl)-L-seryl-[EGF-like domain protein] + UDP-N-acetyl-alpha-D-glucosamine = 3-O-(N-acetyl-beta-D-glucosaminyl-(1-&gt;3)-alpha-L-fucosyl)-L-seryl-[EGF-like domain protein] + UDP + H(+). Its function is as follows. Glycosyltransferase that initiates the elongation of O-linked fucose residues attached to EGF-like repeats in the extracellular domain of Notch molecules. The chain is Beta-1,3-N-acetylglucosaminyltransferase radical fringe (rfng) from Xenopus laevis (African clawed frog).